Consider the following 149-residue polypeptide: Calmodulin-2 (149 aa).

A2 is subject to N-acetylalanine. EF-hand domains lie at E8 to N43, P44 to D79, D81 to K116, and L117 to K149. Ca(2+) is bound by residues D21, D23, N25, N27, E32, D57, D59, N61, T63, E68, D94, D96, N98, and E105. At K116 the chain carries N6,N6,N6-trimethyllysine. Ca(2+) is bound by residues D130, D132, D134, Q136, and E141.

This sequence belongs to the calmodulin family.

Calmodulin mediates the control of a large number of enzymes, ion channels and other proteins by Ca(2+). Among the enzymes to be stimulated by the calmodulin-Ca(2+) complex are a number of protein kinases and phosphatases. The sequence is that of Calmodulin-2 (CAM2) from Branchiostoma floridae (Florida lancelet).